Here is a 363-residue protein sequence, read N- to C-terminus: Small ribosomal subunit biogenesis GTPase RsgA (363 aa).

The CP-type G domain occupies 112–268 (HQQVIAANID…LIDTPGMREL (157 aa)). GTP is bound by residues 157-160 (TKAD) and 210-218 (GSSGAGKST). Residues C291, C296, H298, and C304 each contribute to the Zn(2+) site. A disordered region spans residues 340 to 363 (RVAQNNRGKGSGKRPASIDRPGRR).

It belongs to the TRAFAC class YlqF/YawG GTPase family. RsgA subfamily. As to quaternary structure, monomer. Associates with 30S ribosomal subunit, binds 16S rRNA. Zn(2+) serves as cofactor.

It localises to the cytoplasm. Functionally, one of several proteins that assist in the late maturation steps of the functional core of the 30S ribosomal subunit. Helps release RbfA from mature subunits. May play a role in the assembly of ribosomal proteins into the subunit. Circularly permuted GTPase that catalyzes slow GTP hydrolysis, GTPase activity is stimulated by the 30S ribosomal subunit. The sequence is that of Small ribosomal subunit biogenesis GTPase RsgA from Xanthomonas oryzae pv. oryzae (strain MAFF 311018).